Consider the following 814-residue polypeptide: Echinoderm microtubule-associated protein-like 1 (814 aa).

Positions 31-72 (SMEVSDRIASLEQRVQMQEDDIQLLKSALADVVRRLNITEEQ) form a coiled coil. Residues 77-180 (NRKGPTKARP…ESKPKEPAFS (104 aa)) form a disordered region. The segment covering 92–101 (PLRTTVNNGT) has biased composition (polar residues). Low complexity predominate over residues 103-115 (LPKKPSASLPAPS). The span at 127 to 137 (KSINRTSSSER) shows a compositional bias: polar residues. Over residues 142 to 152 (GRRESSGDSKG) the composition is skewed to basic and acidic residues. Positions 155–167 (NRTGSTSSSSSGK) are enriched in low complexity. The tract at residues 175 to 814 (KEPAFSPEEG…DTSIMQWRVI (640 aa)) is tandem atypical propeller in EMLs. WD repeat units follow at residues 260-309 (EQLQ…IWDS), 314-357 (TLHV…VWDW), 362-399 (RLAD…FWTL), 408-445 (QGLF…VWGK), 449-488 (RISY…SWNG), 492-529 (KLHK…LQGT), 534-571 (FTPI…LWDA), 577-612 (VWDK…VFDT), 616-654 (DLVT…IYGV), 663-700 (RVGK…YWVP), 708-767 (SVET…LFSY), and 774-813 (APSH…QWRV).

Belongs to the WD repeat EMAP family. As to quaternary structure, homotrimer; self-association is mediated by the N-terminal coiled coil. Does not interact with EML3. Binds unpolymerized tubulins via its WD repeat region. Binds repolymerizing microtubules. Interacts with TASOR. As to expression, detected in adult brain cortex, hippocampus and thalamus. Expressed in the stomach, lungs and in Sertoli cells of the testis.

It localises to the cytoplasm. It is found in the perinuclear region. The protein resides in the cytoskeleton. Its function is as follows. Modulates the assembly and organization of the microtubule cytoskeleton, and probably plays a role in regulating the orientation of the mitotic spindle and the orientation of the plane of cell division. Required for normal proliferation of neuronal progenitor cells in the developing brain and for normal brain development. Does not affect neuron migration per se. In Mus musculus (Mouse), this protein is Echinoderm microtubule-associated protein-like 1 (Eml1).